Reading from the N-terminus, the 202-residue chain is Small ribosomal subunit protein uS4 (202 aa).

The S4 RNA-binding domain maps to 91-168 (SRLSSILYNS…HKVPDYLEVD (78 aa)).

Belongs to the universal ribosomal protein uS4 family. Part of the 30S ribosomal subunit. Contacts protein S5. The interaction surface between S4 and S5 is involved in control of translational fidelity.

Functionally, one of the primary rRNA binding proteins, it binds directly to 16S rRNA where it nucleates assembly of the body of the 30S subunit. Its function is as follows. With S5 and S12 plays an important role in translational accuracy. The sequence is that of Small ribosomal subunit protein uS4 from Ehrlichia canis (strain Jake).